Reading from the N-terminus, the 71-residue chain is Virion membrane protein A13 homolog (71 aa).

Residues 1-21 (MGIIDTFVITAVTVIIFCLLI) form a helical membrane-spanning segment. The Virion surface segment spans residues 22–70 (YAAYKRYKCIPSPDDRDKVLKSTLNDDTLFNQTLTPDQVKALHRLVTSS).

The protein belongs to the chordopoxvirinae A13 family.

It is found in the virion membrane. Its function is as follows. Essential for the encapsidation of DNA into immature virions (IV) and the subsequent maturation of IV into mature virions (MV). In Vertebrata (FPV), this protein is Virion membrane protein A13 homolog.